The primary structure comprises 346 residues: Biotin synthase (346 aa).

The region spanning 38-256 (QQVQVSTLLS…IAVARIMMPT (219 aa)) is the Radical SAM core domain. Positions 53, 57, and 60 each coordinate [4Fe-4S] cluster. 4 residues coordinate [2Fe-2S] cluster: C97, C128, C188, and R260.

This sequence belongs to the radical SAM superfamily. Biotin synthase family. Homodimer. [4Fe-4S] cluster serves as cofactor. [2Fe-2S] cluster is required as a cofactor.

It catalyses the reaction (4R,5S)-dethiobiotin + (sulfur carrier)-SH + 2 reduced [2Fe-2S]-[ferredoxin] + 2 S-adenosyl-L-methionine = (sulfur carrier)-H + biotin + 2 5'-deoxyadenosine + 2 L-methionine + 2 oxidized [2Fe-2S]-[ferredoxin]. Its pathway is cofactor biosynthesis; biotin biosynthesis; biotin from 7,8-diaminononanoate: step 2/2. Functionally, catalyzes the conversion of dethiobiotin (DTB) to biotin by the insertion of a sulfur atom into dethiobiotin via a radical-based mechanism. In Salmonella newport (strain SL254), this protein is Biotin synthase.